The chain runs to 652 residues: Phosphatidylinositol-binding clathrin assembly protein (652 aa).

Ser-2 is subject to N-acetylserine. Residues 14 to 145 (QHSVTGSAVS…VSYRQVAFDF (132 aa)) enclose the ENTH domain. Residues Ser-16 and Ser-20 each carry the phosphoserine modification. Residues 221-294 (KYFDMKKNQC…LEGKKIKDST (74 aa)) form an interaction with PIMREG region. A Glycyl lysine isopeptide (Lys-Gly) (interchain with G-Cter in SUMO2) cross-link involves residue Lys-238. Phosphoserine is present on residues Ser-303 and Ser-315. Residues 559–580 (KNDVNWSQPGEKKLTGGSNWQP) are disordered.

This sequence belongs to the PICALM/SNAP91 family. In terms of assembly, binds to clathrin; involves primarily the C-terminal sequences, but the full-length protein is required for full binding capacity. Binds phosphatidylinositol 4,5- bisphosphate. Interacts with PIMREG; this interaction may change the subcellular location into the nucleus. Interacts with AP2A1 (via its alpha-appendage domain). Interacts (via N-terminus) with VAMP2; VAMP3; VAMP7 and VAMP8 (Via N-terminus). Interacts with LC3/MAP1LC3A. Expressed in all tissues examined.

It localises to the cell membrane. Its subcellular location is the membrane. The protein localises to the clathrin-coated pit. The protein resides in the golgi apparatus. It is found in the cytoplasmic vesicle. It localises to the clathrin-coated vesicle. Its subcellular location is the nucleus. In terms of biological role, cytoplasmic adapter protein that plays a critical role in clathrin-mediated endocytosis which is important in processes such as internalization of cell receptors, synaptic transmission or removal of apoptotic cells. Recruits AP-2 and attaches clathrin triskelions to the cytoplasmic side of plasma membrane leading to clathrin-coated vesicles (CCVs) assembly. Furthermore, regulates clathrin-coated vesicle size and maturation by directly sensing and driving membrane curvature. In addition to binding to clathrin, mediates the endocytosis of small R-SNARES (Soluble NSF Attachment Protein REceptors) between plasma membranes and endosomes including VAMP2, VAMP3, VAMP4, VAMP7 or VAMP8. In turn, PICALM-dependent SNARE endocytosis is required for the formation and maturation of autophagic precursors. Modulates thereby autophagy and the turnover of autophagy substrates such as MAPT/TAU or amyloid precursor protein cleaved C-terminal fragment (APP-CTF). This is Phosphatidylinositol-binding clathrin assembly protein (PICALM) from Homo sapiens (Human).